A 610-amino-acid polypeptide reads, in one-letter code: Protein mono-ADP-ribosyltransferase PARP6 (610 aa).

The 227-residue stretch at 374 to 600 (EMTQGSYLEI…QDPKIQKEIM (227 aa)) folds into the PARP catalytic domain. Asp580 carries the post-translational modification ADP-ribosyl aspartic acid.

It belongs to the ARTD/PARP family. Auto-mono-ADP-ribosylated.

It carries out the reaction L-aspartyl-[protein] + NAD(+) = 4-O-(ADP-D-ribosyl)-L-aspartyl-[protein] + nicotinamide. The enzyme catalyses L-cysteinyl-[protein] + NAD(+) = S-(ADP-D-ribosyl)-L-cysteinyl-[protein] + nicotinamide + H(+). Its function is as follows. Mono-ADP-ribosyltransferase that mediates mono-ADP-ribosylation of target proteins. This chain is Protein mono-ADP-ribosyltransferase PARP6, found in Pongo abelii (Sumatran orangutan).